The primary structure comprises 131 residues: MSMTDPVADMLTRIRNGQRASKNEVSMPASKLKESIAKVLKDEGYIADYGVDAADGKPVLNIKLKYFQGKPVIETIKRVSRPGLRIYRSKDELPKVIGGLGVAIVSTSNGVMTDRAARALGQGGEVLCIVA.

The tract at residues 1 to 27 (MSMTDPVADMLTRIRNGQRASKNEVSM) is disordered.

This sequence belongs to the universal ribosomal protein uS8 family. As to quaternary structure, part of the 30S ribosomal subunit. Contacts proteins S5 and S12.

Functionally, one of the primary rRNA binding proteins, it binds directly to 16S rRNA central domain where it helps coordinate assembly of the platform of the 30S subunit. The chain is Small ribosomal subunit protein uS8 from Thioalkalivibrio sulfidiphilus (strain HL-EbGR7).